A 411-amino-acid polypeptide reads, in one-letter code: Citrate synthase (411 aa).

Residues H304 and D363 contribute to the active site.

It belongs to the citrate synthase family.

It carries out the reaction oxaloacetate + acetyl-CoA + H2O = citrate + CoA + H(+). It functions in the pathway carbohydrate metabolism; tricarboxylic acid cycle; isocitrate from oxaloacetate: step 1/2. This Rickettsia parkeri protein is Citrate synthase (gltA).